We begin with the raw amino-acid sequence, 337 residues long: Hairy/enhancer-of-split related with YRPW motif protein 2 (337 aa).

A disordered region spans residues M1 to R52. Acidic residues predominate over residues T8 to I18. The span at S22–I46 shows a compositional bias: polar residues. The segment at M47–A116 is transcriptional repression and interaction with NCOR1 and SIN3A. The bHLH domain occupies A48–L103. The region spanning M122–L157 is the Orange domain. Residues L307–K325 are compositionally biased toward polar residues. The disordered stretch occupies residues L307–F337. The YRPW motif signature appears at Y327–W330.

It belongs to the HEY family. As to quaternary structure, may self-associate. Interacts with GATA4, HES1 and HEYL. Interacts with HDAC1, NCOR1 and SIN3A. Interacts with ARNT and GATA6.

It localises to the nucleus. Functionally, downstream effector of Notch signaling which may be required for cardiovascular development. Transcriptional repressor which binds preferentially to the canonical E box sequence 5'-CACGTG-3'. Represses transcription by the cardiac transcriptional activators GATA4 and GATA6. The polypeptide is Hairy/enhancer-of-split related with YRPW motif protein 2 (HEY2) (Homo sapiens (Human)).